Consider the following 202-residue polypeptide: Small ribosomal subunit protein uS4c (202 aa).

One can recognise an S4 RNA-binding domain in the interval 90-153 (MRLDNVIFRL…KSEAIISKNI (64 aa)).

This sequence belongs to the universal ribosomal protein uS4 family. As to quaternary structure, part of the 30S ribosomal subunit. Contacts protein S5. The interaction surface between S4 and S5 is involved in control of translational fidelity.

Its subcellular location is the plastid. It is found in the chloroplast. In terms of biological role, one of the primary rRNA binding proteins, it binds directly to 16S rRNA where it nucleates assembly of the body of the 30S subunit. Functionally, with S5 and S12 plays an important role in translational accuracy. The chain is Small ribosomal subunit protein uS4c (rps4) from Hypopterygium didictyon.